Here is a 413-residue protein sequence, read N- to C-terminus: Gamma-glutamyl phosphate reductase (413 aa).

This sequence belongs to the gamma-glutamyl phosphate reductase family.

It localises to the cytoplasm. It catalyses the reaction L-glutamate 5-semialdehyde + phosphate + NADP(+) = L-glutamyl 5-phosphate + NADPH + H(+). It functions in the pathway amino-acid biosynthesis; L-proline biosynthesis; L-glutamate 5-semialdehyde from L-glutamate: step 2/2. Catalyzes the NADPH-dependent reduction of L-glutamate 5-phosphate into L-glutamate 5-semialdehyde and phosphate. The product spontaneously undergoes cyclization to form 1-pyrroline-5-carboxylate. The protein is Gamma-glutamyl phosphate reductase of Lactococcus lactis subsp. lactis (strain IL1403) (Streptococcus lactis).